Here is a 107-residue protein sequence, read N- to C-terminus: Putative double-stranded DNA mimic protein Spro_2690 (107 aa).

It belongs to the putative dsDNA mimic protein family.

May act as a double-stranded DNA (dsDNA) mimic. Probably regulates the activity of a dsDNA-binding protein. The sequence is that of Putative double-stranded DNA mimic protein Spro_2690 from Serratia proteamaculans (strain 568).